The primary structure comprises 633 residues: Dynein axonemal assembly factor 1 (633 aa).

The disordered stretch occupies residues 1–80 (MHPEASEPPV…SRDDRDDRGP (80 aa)). Over residues 22-42 (AGDHGDAGPGVRKEEINETKE) the composition is skewed to basic and acidic residues. The span at 46 to 60 (GPCTTSCQSQQQPSG) shows a compositional bias: low complexity. Residues 70-80 (HSRDDRDDRGP) show a composition bias toward basic and acidic residues. LRR repeat units lie at residues 101-123 (ALND…EEYT), 124-145 (GLRC…QAQS), 146-167 (ELRC…EPLQ), 168-189 (KLDA…SCLP), 190-211 (VLNT…EHLR), and 215-236 (QLCV…SVLE). In terms of domain architecture, LRRCT spans 249-288 (NPVTKHIPNYRRTVTVRLKHLTYLDDRPVFPKDRACAEAW). Residues 326 to 344 (EERKKARDRGETPLPESEK) are compositionally biased toward basic and acidic residues. Disordered regions lie at residues 326 to 364 (EERK…TQQK) and 404 to 436 (LSGN…RTED). Ser-349 is modified (phosphoserine). Residues 352-364 (AQEKPPKGETQQK) show a composition bias toward basic and acidic residues. Residues 413–427 (TPVVVTPEEVTSPVE) show a composition bias toward low complexity. At Thr-462 the chain carries Phosphothreonine. Ser-465 and Ser-488 each carry phosphoserine. 2 stretches are compositionally biased toward polar residues: residues 538–555 (TTDL…SSHP) and 568–592 (GESN…SEGG). A disordered region spans residues 538–633 (TTDLETQSQD…GLEDIEFGLD (96 aa)).

The protein belongs to the DNAAF1 family.

It localises to the cell projection. The protein resides in the cilium. In terms of biological role, cilium-specific protein required for the stability of the ciliary architecture. Plays a role in cytoplasmic preassembly of dynein arms. Involved in regulation of microtubule-based cilia and actin-based brush border microvilli. This is Dynein axonemal assembly factor 1 (Dnaaf1) from Rattus norvegicus (Rat).